The chain runs to 137 residues: MLQPKRTKFRKQMTGHNRGLAHRGSKVSFGEYALKATGRGRLTARQIESARRALTRHVKRGGKIWIRVFPDKPVTKKPLEVRMGKGKGGVEYWVAQIQPGKVLYEIEGVSEELAREAFALAAAKLPLATSFVKRTVM.

The protein belongs to the universal ribosomal protein uL16 family. As to quaternary structure, part of the 50S ribosomal subunit.

Binds 23S rRNA and is also seen to make contacts with the A and possibly P site tRNAs. The polypeptide is Large ribosomal subunit protein uL16 (Pseudomonas paraeruginosa (strain DSM 24068 / PA7) (Pseudomonas aeruginosa (strain PA7))).